A 139-amino-acid polypeptide reads, in one-letter code: ATP synthase epsilon chain (139 aa).

The protein belongs to the ATPase epsilon chain family. In terms of assembly, F-type ATPases have 2 components, CF(1) - the catalytic core - and CF(0) - the membrane proton channel. CF(1) has five subunits: alpha(3), beta(3), gamma(1), delta(1), epsilon(1). CF(0) has three main subunits: a, b and c.

The protein localises to the cell inner membrane. Its function is as follows. Produces ATP from ADP in the presence of a proton gradient across the membrane. The chain is ATP synthase epsilon chain from Nitrosospira multiformis (strain ATCC 25196 / NCIMB 11849 / C 71).